Here is a 319-residue protein sequence, read N- to C-terminus: MVSSDTGECFSGATVRVPADLADALKQQALEQGFALAGIAAVPSGERIAMRTAALQRWLAAGHQADMAWMQDPRRQAIELLLPGVQSVLAVALNYYVDQQQTPASPKIARYGWGRDYHRVMDQRLRRLGRWLEEQQPSCRWRACVDSAPLMDKAWAEEAGLGWIGKNGNLISPSHGSWLLLGHLLTTASLPADQPARSLCGHCQRCLPACPTAAITEPFVVDSRRCIAFHTIENRDEQVPLPLHGWVAGCDVCQEVCPWNQHHAQSSADPAVQPREWILSSTVNEMASWSDDTWSERLQASALRRIKPWMWRRNLADLG.

The active-site Proton donor is the D146. The region spanning 188–220 (ASLPADQPARSLCGHCQRCLPACPTAAITEPFV) is the 4Fe-4S ferredoxin-type domain. [4Fe-4S] cluster-binding residues include C200, C203, C206, C210, C226, C250, C253, and C257.

Belongs to the QueG family. In terms of assembly, monomer. Cob(II)alamin serves as cofactor. Requires [4Fe-4S] cluster as cofactor.

Its subcellular location is the cytoplasm. It catalyses the reaction epoxyqueuosine(34) in tRNA + AH2 = queuosine(34) in tRNA + A + H2O. Its pathway is tRNA modification; tRNA-queuosine biosynthesis. Functionally, catalyzes the conversion of epoxyqueuosine (oQ) to queuosine (Q), which is a hypermodified base found in the wobble positions of tRNA(Asp), tRNA(Asn), tRNA(His) and tRNA(Tyr). This Synechococcus sp. (strain RCC307) protein is Epoxyqueuosine reductase.